The sequence spans 377 residues: Heat stress transcription factor B-2b (377 aa).

Positions 1 to 56 (MPGEQTGETPTVAGVGGGGAGCSAGNSGGSSGCGAGGGGGGSGGGGGGGGDSQRSI) are disordered. Gly residues predominate over residues 14–51 (GVGGGGAGCSAGNSGGSSGCGAGGGGGGSGGGGGGGGD). Residues 57–151 (PTPFLTKTYQ…LLRDIQRRKI (95 aa)) mediate DNA binding. The tract at residues 220–265 (TTSCTTAPELVEENERLRKDNERLRKEMTKLKGLYANIYTLMANFT) is hydrophobic repeat HR-A/B. Positions 323–327 (KRARR) match the Nuclear localization signal motif. The segment at 326 to 377 (RREEELGAAEEEDDDRREAAAQEGEQSSDVKAEPMEENNSGNHNGSWLELGK) is disordered. Positions 331-340 (LGAAEEEDDD) are enriched in acidic residues.

The protein belongs to the HSF family. Class B subfamily. Homotrimer. In terms of processing, exhibits temperature-dependent phosphorylation.

It is found in the nucleus. Transcriptional regulator that specifically binds DNA sequence 5'-AGAAnnTTCT-3' known as heat shock promoter elements (HSE). In Arabidopsis thaliana (Mouse-ear cress), this protein is Heat stress transcription factor B-2b (HSFB2B).